The following is an 83-amino-acid chain: Apolipoprotein C-I, acidic form (83 aa).

The first 26 residues, 1–26 (MRLFLSLPVLVVVLSMVLEGPAPAQG), serve as a signal peptide directing secretion.

Belongs to the apolipoprotein C1 family.

It localises to the secreted. In Pan troglodytes (Chimpanzee), this protein is Apolipoprotein C-I, acidic form (APOC1A).